A 540-amino-acid chain; its full sequence is MLO protein homolog 1 (540 aa).

The Extracellular portion of the chain corresponds to 1–16; sequence MAGGRSGSRELPETPT. Residues 17–37 traverse the membrane as a helical segment; sequence WAVAVVCAVLVLVSAAMEHGL. Residues 38–60 are Cytoplasmic-facing; the sequence is HNLSHWFRRRQKKAMGDALDKIK. A helical membrane pass occupies residues 61-81; the sequence is AELMLLGFISLLLTVAQAPIS. The Extracellular portion of the chain corresponds to 82-142; it reads KICIPKSAAN…MSAKSMHQLH (61 aa). A helical membrane pass occupies residues 143–163; it reads IFIFVLAVFHVTYCIITMGLG. Over 164–265 the chain is Cytoplasmic; it reads RLKMKKWKKW…IKRSLEDDFK (102 aa). The helical transmembrane segment at 266–286 threads the bilayer; sequence VVVGISLPLWFVGILVLFLDI. Position 287 (His-287) is a topological domain, extracellular. The helical transmembrane segment at 288 to 308 threads the bilayer; the sequence is GLGTLIWISFVPLIIVLLVGT. Residues 309–347 lie on the Cytoplasmic side of the membrane; it reads KLEMVIMEMAQEIQDRATVIQGAPMVEPSNKYFWFNRPD. The chain crosses the membrane as a helical span at residues 348-368; the sequence is WVLFFIHLTLFHNAFQMAHFV. Residues 369 to 383 are Extracellular-facing; that stretch reads WTMATPGLKKCFHEN. Residues 384–404 form a helical membrane-spanning segment; that stretch reads IWLSIVEVIVGISLQVLCSYI. Over 405–540 the chain is Cytoplasmic; that stretch reads TFPLYALVTQ…DSDFSFSAQR (136 aa). The tract at residues 426–447 is calmodulin-binding; the sequence is EQTMKALMNWRKKAMEKKKVRD. Residues 468 to 526 form a disordered region; sequence ASPVHLLQDHRARSDDPPSPITVASPPAPEEDMYPVPAAAASRQLLDDPPDRRWMASSS. 2 stretches are compositionally biased toward basic and acidic residues: residues 474–483 and 512–521; these read LQDHRARSDD and LLDDPPDRRW.

This sequence belongs to the MLO family.

The protein resides in the membrane. Its function is as follows. May be involved in modulation of pathogen defense and leaf cell death. Activity seems to be regulated by Ca(2+)-dependent calmodulin binding and seems not to require heterotrimeric G proteins. The protein is MLO protein homolog 1 (MLO1) of Oryza sativa subsp. indica (Rice).